The chain runs to 599 residues: Elongation factor 4 (599 aa).

The region spanning glutamate 4–lysine 186 is the tr-type G domain. GTP contacts are provided by residues aspartate 16–threonine 21 and asparagine 133–aspartate 136.

This sequence belongs to the TRAFAC class translation factor GTPase superfamily. Classic translation factor GTPase family. LepA subfamily.

It localises to the cell inner membrane. The catalysed reaction is GTP + H2O = GDP + phosphate + H(+). Functionally, required for accurate and efficient protein synthesis under certain stress conditions. May act as a fidelity factor of the translation reaction, by catalyzing a one-codon backward translocation of tRNAs on improperly translocated ribosomes. Back-translocation proceeds from a post-translocation (POST) complex to a pre-translocation (PRE) complex, thus giving elongation factor G a second chance to translocate the tRNAs correctly. Binds to ribosomes in a GTP-dependent manner. In Citrifermentans bemidjiense (strain ATCC BAA-1014 / DSM 16622 / JCM 12645 / Bem) (Geobacter bemidjiensis), this protein is Elongation factor 4.